Consider the following 303-residue polypeptide: Movement protein (303 aa).

Positions 272–302 form a coiled coil; sequence PPKRDFELTETSKLKSMISDLTQKVVNLDKK.

It belongs to the caulimoviridae movement protein family. As to quaternary structure, homotrimer, through the coiled-coil domain. Interacts with VAP.

Its subcellular location is the host cell junction. The protein resides in the host plasmodesma. Transports viral genome to neighboring plant cells directly through plasmosdesmata, without any budding. The movement protein allows efficient cell to cell propagation, by bypassing the host cell wall barrier. Acts by forming tubules structures that increase the size exclusion limit (SEL) of plasmodesmata, thereby allowing viral ribonucleocapsids to spread directly to neighboring cells. This chain is Movement protein, found in Soybean chlorotic mottle virus.